A 102-amino-acid polypeptide reads, in one-letter code: Putative septation protein SpoVG (102 aa).

The disordered stretch occupies residues 83 to 102; it reads TDEVIPDKNATSDNEESDEA.

Belongs to the SpoVG family.

Could be involved in septation. The sequence is that of Putative septation protein SpoVG from Staphylococcus epidermidis (strain ATCC 35984 / DSM 28319 / BCRC 17069 / CCUG 31568 / BM 3577 / RP62A).